The primary structure comprises 184 residues: ATP synthase subunit b, chloroplastic (184 aa).

Residues 27-49 (LATNPINLSVVLGVLIFFGKGVL) form a helical membrane-spanning segment.

Belongs to the ATPase B chain family. F-type ATPases have 2 components, F(1) - the catalytic core - and F(0) - the membrane proton channel. F(1) has five subunits: alpha(3), beta(3), gamma(1), delta(1), epsilon(1). F(0) has four main subunits: a(1), b(1), b'(1) and c(10-14). The alpha and beta chains form an alternating ring which encloses part of the gamma chain. F(1) is attached to F(0) by a central stalk formed by the gamma and epsilon chains, while a peripheral stalk is formed by the delta, b and b' chains.

The protein resides in the plastid. It localises to the chloroplast thylakoid membrane. Its function is as follows. F(1)F(0) ATP synthase produces ATP from ADP in the presence of a proton or sodium gradient. F-type ATPases consist of two structural domains, F(1) containing the extramembraneous catalytic core and F(0) containing the membrane proton channel, linked together by a central stalk and a peripheral stalk. During catalysis, ATP synthesis in the catalytic domain of F(1) is coupled via a rotary mechanism of the central stalk subunits to proton translocation. Functionally, component of the F(0) channel, it forms part of the peripheral stalk, linking F(1) to F(0). The protein is ATP synthase subunit b, chloroplastic of Lepidium virginicum (Virginia pepperweed).